Reading from the N-terminus, the 215-residue chain is MRTGIIAQKVGMTSVFNDKGERISLTLVKVDDCQVVGHKTLEKHGYNALVIGVKDKKISRVTKPMKQVFANAKISPKTKLKEFRISEEHFIDIATSLEVDHFTAGQFVDITATTIGKGFAGSMKRHNFRGLEASHGVSISHRSHGSTGQRQDPGKVFRGKKMAGHMGCNQVTIQNLKIFAVDKERKLIMIQGSIPGHKNSYLSVKDAIKKISIIV.

At Gln151 the chain carries N5-methylglutamine.

The protein belongs to the universal ribosomal protein uL3 family. Part of the 50S ribosomal subunit. Forms a cluster with proteins L14 and L19. Post-translationally, methylated by PrmB.

Functionally, one of the primary rRNA binding proteins, it binds directly near the 3'-end of the 23S rRNA, where it nucleates assembly of the 50S subunit. This chain is Large ribosomal subunit protein uL3, found in Rickettsia massiliae (strain Mtu5).